The chain runs to 45 residues: Rubredoxin-1 (45 aa).

The residue at position 1 (Met1) is an N-formylmethionine. Residues 1–45 enclose the Rubredoxin-like domain; it reads MQKYVCNVCGYEYDPAEHDNVPFDQLPDDWCCPVCGVSKDQFSPA. Fe cation-binding residues include Cys6, Cys9, Cys32, and Cys35.

Belongs to the rubredoxin family. The cofactor is Fe(3+).

It localises to the cytoplasm. Its function is as follows. Rubredoxin is a small nonheme, iron protein lacking acid-labile sulfide. Its single Fe, chelated to 4 Cys, functions as an electron acceptor and may also stabilize the conformation of the molecule. In terms of biological role, electron acceptor for cytoplasmic lactate dehydrogenase. This Desulfovibrio desulfuricans (strain ATCC 27774 / DSM 6949 / MB) protein is Rubredoxin-1 (rd1).